The primary structure comprises 382 residues: 1-deoxy-D-xylulose 5-phosphate reductoisomerase (382 aa).

NADPH-binding residues include serine 10, glycine 11, serine 12, isoleucine 13, glycine 36, lysine 37, asparagine 38, and asparagine 121. Lysine 122 is a binding site for 1-deoxy-D-xylulose 5-phosphate. Glutamate 123 is an NADPH binding site. Aspartate 147 is a binding site for Mn(2+). 1-deoxy-D-xylulose 5-phosphate-binding residues include serine 148, glutamate 149, serine 173, and histidine 196. Glutamate 149 contributes to the Mn(2+) binding site. Glycine 202 lines the NADPH pocket. 1-deoxy-D-xylulose 5-phosphate is bound by residues serine 209, asparagine 214, lysine 215, and glutamate 218. Glutamate 218 lines the Mn(2+) pocket.

This sequence belongs to the DXR family. Mg(2+) is required as a cofactor. Mn(2+) serves as cofactor.

It carries out the reaction 2-C-methyl-D-erythritol 4-phosphate + NADP(+) = 1-deoxy-D-xylulose 5-phosphate + NADPH + H(+). It participates in isoprenoid biosynthesis; isopentenyl diphosphate biosynthesis via DXP pathway; isopentenyl diphosphate from 1-deoxy-D-xylulose 5-phosphate: step 1/6. In terms of biological role, catalyzes the NADPH-dependent rearrangement and reduction of 1-deoxy-D-xylulose-5-phosphate (DXP) to 2-C-methyl-D-erythritol 4-phosphate (MEP). In Geobacillus kaustophilus (strain HTA426), this protein is 1-deoxy-D-xylulose 5-phosphate reductoisomerase.